Consider the following 700-residue polypeptide: Glutamine synthetase (700 aa).

Residues 65-155 form the GS beta-grasp domain; the sequence is YHFTPPGSSP…LPTAFCSYGG (91 aa). The 431-residue stretch at 159–589 folds into the GS catalytic domain; it reads DRDSLLRSME…TMQEMIRKDL (431 aa). E196, E198, E267, and E274 together coordinate Mg(2+). L-glutamate is bound by residues 318 to 319 and G319; that span reads NG. H323 provides a ligand contact to Mg(2+). ATP contacts are provided by S327 and R435. R435 serves as a coordination point for L-glutamate. E472 is a Mg(2+) binding site.

The protein belongs to the glutamine synthetase family. Homohexamer. It depends on Mg(2+) as a cofactor.

The protein resides in the cytoplasm. The enzyme catalyses L-glutamate + NH4(+) + ATP = L-glutamine + ADP + phosphate + H(+). Its activity is regulated as follows. The activity of this enzyme is not controlled by adenylation. Its function is as follows. Catalyzes the ATP-dependent biosynthesis of glutamine from glutamate and ammonia. This Butyrivibrio fibrisolvens protein is Glutamine synthetase.